The following is a 360-amino-acid chain: Glutamate 5-kinase (360 aa).

K7 contributes to the ATP binding site. Residues S47, D134, and N146 each contribute to the substrate site. Residues 166-167 and 210-216 contribute to the ATP site; these read TD and TGGISTK. The region spanning 275–356 is the PUA domain; that stretch reads VGKITLDDGA…SSIIVVHRDV (82 aa).

Belongs to the glutamate 5-kinase family.

The protein resides in the cytoplasm. It catalyses the reaction L-glutamate + ATP = L-glutamyl 5-phosphate + ADP. It functions in the pathway amino-acid biosynthesis; L-proline biosynthesis; L-glutamate 5-semialdehyde from L-glutamate: step 1/2. Catalyzes the transfer of a phosphate group to glutamate to form L-glutamate 5-phosphate. The protein is Glutamate 5-kinase of Prochlorococcus marinus (strain MIT 9312).